We begin with the raw amino-acid sequence, 385 residues long: Probable tRNA sulfurtransferase (385 aa).

One can recognise a THUMP domain in the interval Asp57 to Lys160. Residues Met180 to Leu181, Tyr205 to Tyr206, Arg262, Gly284, and Gln293 contribute to the ATP site.

This sequence belongs to the ThiI family.

The protein localises to the cytoplasm. The enzyme catalyses [ThiI sulfur-carrier protein]-S-sulfanyl-L-cysteine + a uridine in tRNA + 2 reduced [2Fe-2S]-[ferredoxin] + ATP + H(+) = [ThiI sulfur-carrier protein]-L-cysteine + a 4-thiouridine in tRNA + 2 oxidized [2Fe-2S]-[ferredoxin] + AMP + diphosphate. It catalyses the reaction [ThiS sulfur-carrier protein]-C-terminal Gly-Gly-AMP + S-sulfanyl-L-cysteinyl-[cysteine desulfurase] + AH2 = [ThiS sulfur-carrier protein]-C-terminal-Gly-aminoethanethioate + L-cysteinyl-[cysteine desulfurase] + A + AMP + 2 H(+). It functions in the pathway cofactor biosynthesis; thiamine diphosphate biosynthesis. In terms of biological role, catalyzes the ATP-dependent transfer of a sulfur to tRNA to produce 4-thiouridine in position 8 of tRNAs, which functions as a near-UV photosensor. Also catalyzes the transfer of sulfur to the sulfur carrier protein ThiS, forming ThiS-thiocarboxylate. This is a step in the synthesis of thiazole, in the thiamine biosynthesis pathway. The sulfur is donated as persulfide by IscS. This is Probable tRNA sulfurtransferase from Clostridium perfringens (strain 13 / Type A).